A 465-amino-acid polypeptide reads, in one-letter code: Fumarate hydratase class II (465 aa).

Substrate contacts are provided by residues 99–101 (SGT), Arg127, 130–133 (HPND), 140–142 (STN), and Thr188. His189 serves as the catalytic Proton donor/acceptor. Ser319 is an active-site residue. Residues Ser320 and 325–327 (KVN) each bind substrate.

The protein belongs to the class-II fumarase/aspartase family. Fumarase subfamily. In terms of assembly, homotetramer.

Its subcellular location is the cytoplasm. It carries out the reaction (S)-malate = fumarate + H2O. The protein operates within carbohydrate metabolism; tricarboxylic acid cycle; (S)-malate from fumarate: step 1/1. Its function is as follows. Involved in the TCA cycle. Catalyzes the stereospecific interconversion of fumarate to L-malate. The chain is Fumarate hydratase class II from Parasynechococcus marenigrum (strain WH8102).